A 437-amino-acid chain; its full sequence is UDP-N-acetylmuramate--L-alanine ligase (437 aa).

Position 114–120 (114–120 (GTHGKTS)) interacts with ATP.

It belongs to the MurCDEF family.

Its subcellular location is the cytoplasm. The catalysed reaction is UDP-N-acetyl-alpha-D-muramate + L-alanine + ATP = UDP-N-acetyl-alpha-D-muramoyl-L-alanine + ADP + phosphate + H(+). Its pathway is cell wall biogenesis; peptidoglycan biosynthesis. Its function is as follows. Cell wall formation. The chain is UDP-N-acetylmuramate--L-alanine ligase from Lactobacillus acidophilus (strain ATCC 700396 / NCK56 / N2 / NCFM).